Reading from the N-terminus, the 246-residue chain is CTD nuclear envelope phosphatase 1 homolog (246 aa).

A helical transmembrane segment spans residues T3–F23. The FCP1 homology domain maps to L53 to L220.

The protein belongs to the dullard family.

It is found in the membrane. Its subcellular location is the nucleus envelope. The enzyme catalyses O-phospho-L-seryl-[protein] + H2O = L-seryl-[protein] + phosphate. It catalyses the reaction O-phospho-L-threonyl-[protein] + H2O = L-threonyl-[protein] + phosphate. Its function is as follows. Serine/threonine protein phosphatase that may dephosphorylate and activate lipin-like phosphatases. Lipins are phosphatidate phosphatases that catalyze the conversion of phosphatidic acid to diacylglycerol and control the metabolism of fatty acids at different levels. May indirectly modulate the lipid composition of nuclear and/or endoplasmic reticulum membranes and be required for proper nuclear membrane morphology and/or dynamics. Contributes to closure of nuclear envelope (NE) holes and prevents excess nuclear membranes after meiosis and mitosis, possibly through spatial regulation of lipin. May limit the production of endoplasmic reticulum (ER) sheets proximal to the NE to prevent the ER membranes that feed into NE openings from invading the nuclear interior and thereby restrict nuclear transport to nuclear pore complexes (NPCs). May also indirectly regulate the production of lipid droplets and triacylglycerol. This Caenorhabditis elegans protein is CTD nuclear envelope phosphatase 1 homolog (cnep-1).